A 449-amino-acid chain; its full sequence is Tryptophan--tRNA ligase (449 aa).

ATP is bound by residues threonine 10–threonine 12 and glycine 18–asparagine 19. The short motif at threonine 11–asparagine 19 is the 'HIGH' region element. Position 143 (aspartate 143) interacts with L-tryptophan. Residues glycine 155–aspartate 157, leucine 197, and lysine 204–serine 208 contribute to the ATP site. A 'KMSKS' region motif is present at residues lysine 204–serine 208.

This sequence belongs to the class-I aminoacyl-tRNA synthetase family. Homodimer.

The protein localises to the cytoplasm. The enzyme catalyses tRNA(Trp) + L-tryptophan + ATP = L-tryptophyl-tRNA(Trp) + AMP + diphosphate + H(+). In terms of biological role, catalyzes the attachment of tryptophan to tRNA(Trp). The sequence is that of Tryptophan--tRNA ligase from Pseudomonas putida (strain ATCC 47054 / DSM 6125 / CFBP 8728 / NCIMB 11950 / KT2440).